A 463-amino-acid chain; its full sequence is Cysteine--tRNA ligase (463 aa).

Residue Cys-29 coordinates Zn(2+). The 'HIGH' region motif lies at 31 to 41 (PTVYDFAHIGN). Residues Cys-227, His-252, and Glu-256 each contribute to the Zn(2+) site. Positions 285–289 (KMSKS) match the 'KMSKS' region motif. Residue Lys-288 participates in ATP binding.

This sequence belongs to the class-I aminoacyl-tRNA synthetase family. In terms of assembly, monomer. It depends on Zn(2+) as a cofactor.

It localises to the cytoplasm. It catalyses the reaction tRNA(Cys) + L-cysteine + ATP = L-cysteinyl-tRNA(Cys) + AMP + diphosphate. The protein is Cysteine--tRNA ligase of Rhodopseudomonas palustris (strain BisB5).